The chain runs to 326 residues: Myeloid protein 1 (326 aa).

The signal sequence occupies residues 1–18 (MPALSLIALLSLVSTAFA). 2 repeat units span residues 28-162 (QQGR…SDPT) and 177-312 (QQDA…SDPT). Intrachain disulfides connect Cys37–Cys74, Cys48–Cys53, and Cys113–Cys156. Residues His67, Asp71, and His152 each contribute to the Zn(2+) site. Residues 307–326 (DRSDPTSNLERGKGESEMEV) are disordered.

This sequence belongs to the LECT2/MIM-1 family. Post-translationally, substrate for arginine-specific ADP-ribosyltransferase.

It is found in the cytoplasmic granule. The polypeptide is Myeloid protein 1 (MIM1) (Gallus gallus (Chicken)).